Consider the following 135-residue polypeptide: ATP synthase epsilon chain (135 aa).

The interval 91 to 122 is disordered; it reads EAQKQLSEAEQAWSKFDGQPNSPDKIKAQQAF.

It belongs to the ATPase epsilon chain family. F-type ATPases have 2 components, CF(1) - the catalytic core - and CF(0) - the membrane proton channel. CF(1) has five subunits: alpha(3), beta(3), gamma(1), delta(1), epsilon(1). CF(0) has three main subunits: a, b and c.

The protein resides in the cellular thylakoid membrane. Functionally, produces ATP from ADP in the presence of a proton gradient across the membrane. This chain is ATP synthase epsilon chain, found in Synechococcus sp. (strain RCC307).